We begin with the raw amino-acid sequence, 509 residues long: Ethanolamine-phosphate phospho-lyase (509 aa).

Lys279 carries the post-translational modification N6-(pyridoxal phosphate)lysine. Over residues 451–474 (EKTSAKRKVHNENSGDTNAKEKET) the composition is skewed to basic and acidic residues. The tract at residues 451–509 (EKTSAKRKVHNENSGDTNAKEKETCSSNSQERNPNDHAYRQSNGLHPESPTFTRKRIRT) is disordered.

The protein belongs to the class-III pyridoxal-phosphate-dependent aminotransferase family. Homotetramer. The cofactor is pyridoxal 5'-phosphate.

It is found in the mitochondrion. The enzyme catalyses phosphoethanolamine + H2O = acetaldehyde + NH4(+) + phosphate. In terms of biological role, catalyzes the pyridoxal-phosphate-dependent breakdown of phosphoethanolamine, converting it to ammonia, inorganic phosphate and acetaldehyde. The chain is Ethanolamine-phosphate phospho-lyase (etnppl) from Xenopus laevis (African clawed frog).